Reading from the N-terminus, the 378-residue chain is Cobalt-precorrin-5B C(1)-methyltransferase (378 aa).

Belongs to the CbiD family.

The catalysed reaction is Co-precorrin-5B + S-adenosyl-L-methionine = Co-precorrin-6A + S-adenosyl-L-homocysteine. The protein operates within cofactor biosynthesis; adenosylcobalamin biosynthesis; cob(II)yrinate a,c-diamide from sirohydrochlorin (anaerobic route): step 6/10. In terms of biological role, catalyzes the methylation of C-1 in cobalt-precorrin-5B to form cobalt-precorrin-6A. In Methanococcus aeolicus (strain ATCC BAA-1280 / DSM 17508 / OCM 812 / Nankai-3), this protein is Cobalt-precorrin-5B C(1)-methyltransferase.